The sequence spans 137 residues: NADPH-dependent 7-cyano-7-deazaguanine reductase (137 aa).

The active-site Thioimide intermediate is the Cys-45. Asp-52 serves as the catalytic Proton donor. Residues Val-68 to Leu-70 and Gln-87 to Glu-88 each bind substrate.

It belongs to the GTP cyclohydrolase I family. QueF type 1 subfamily.

The protein resides in the cytoplasm. The enzyme catalyses 7-aminomethyl-7-carbaguanine + 2 NADP(+) = 7-cyano-7-deazaguanine + 2 NADPH + 3 H(+). Its pathway is tRNA modification; tRNA-queuosine biosynthesis. Functionally, catalyzes the NADPH-dependent reduction of 7-cyano-7-deazaguanine (preQ0) to 7-aminomethyl-7-deazaguanine (preQ1). In Thermotoga petrophila (strain ATCC BAA-488 / DSM 13995 / JCM 10881 / RKU-1), this protein is NADPH-dependent 7-cyano-7-deazaguanine reductase.